The sequence spans 252 residues: MVTNVGEQLKKQPVLRGGGFTFKQFFVAHDRCAMKVGTDGVLLGAWVPVLHARRVLDIGCGSGLIALMIAQRSLPQVQIDGVELEPAAAQQASSNVELSPWAERIHIHQQDIHQFAENHPHQYDLIVSNPPYFAPAIACRDEARDTARYTGSLTHDTLLNCAEKLITEDGMFCVVLPHELGIEFARLAGQQGWFVRCQVDIRDRPGKPLHRMLLTLSRQAGETVYQHLALRQSEGVYSPEFCQLISDFYLNY.

The protein belongs to the methyltransferase superfamily. tRNA (adenine-N(6)-)-methyltransferase family.

It is found in the cytoplasm. The enzyme catalyses adenosine(37) in tRNA1(Val) + S-adenosyl-L-methionine = N(6)-methyladenosine(37) in tRNA1(Val) + S-adenosyl-L-homocysteine + H(+). Specifically methylates the adenine in position 37 of tRNA(1)(Val) (anticodon cmo5UAC). The polypeptide is tRNA1(Val) (adenine(37)-N6)-methyltransferase (Yersinia pseudotuberculosis serotype O:3 (strain YPIII)).